The sequence spans 845 residues: Taste receptor type 1 member 3 (845 aa).

The signal sequence occupies residues 1-18 (MAGLMLLSLMALLGLGAG). The Extracellular segment spans residues 19–568 (APLCLSRQLR…FLAWGQPAVL (550 aa)). Residues Asn128 and Asn262 are each glycosylated (N-linked (GlcNAc...) asparagine). The helical transmembrane segment at 569 to 589 (VLLILLALALGLVLVALGLFI) threads the bilayer. Topologically, residues 590 to 601 (RHRDSPLVQASG) are cytoplasmic. Residues 602–622 (GPRACFGLACLGLVCLSVLLF) form a helical membrane-spanning segment. At 623–637 (PGQPGPASCLAQQPL) the chain is on the extracellular side. Residues 638–658 (LHLPLTGCLSTLFLQAAQIFV) form a helical membrane-spanning segment. Residues 659–680 (GSELPSSWADQLRRCLQGPWAW) lie on the Cytoplasmic side of the membrane. A helical transmembrane segment spans residues 681 to 701 (LLVLLALLAEAALCAWYLVAF). Over 702–727 (PPEVVTDWWVLPTQVLVHCRMRSWIS) the chain is Extracellular. Residues 728–748 (FGLLHAINAMLAFLCFLGTFL) form a helical membrane-spanning segment. Residues 749 to 760 (VQSRPGRYNGAR) lie on the Cytoplasmic side of the membrane. A helical transmembrane segment spans residues 761–781 (GLTFAMLAYFITWISFVPLFA). Residues 782 to 789 (NVHVAYQP) lie on the Extracellular side of the membrane. Residues 790–810 (TVQMAAILLCALGILATFHLP) traverse the membrane as a helical segment. The Cytoplasmic portion of the chain corresponds to 811 to 845 (KCYLLLQQLELNNPEFFLGDDARGQGSSGSGGKET).

Belongs to the G-protein coupled receptor 3 family. TAS1R subfamily. In terms of assembly, forms homodimers or heterodimers with TAS1R1 and TAS1R2.

It localises to the cell membrane. Putative taste receptor. TAS1R1/TAS1R3 responds to the umami taste stimulus (the taste of monosodium glutamate). TAS1R2/TAS1R3 recognizes diverse natural and synthetic sweeteners. TAS1R3 is essential for the recognition and response to the disaccharide trehalose. Sequence differences within and between species can significantly influence the selectivity and specificity of taste responses. The protein is Taste receptor type 1 member 3 (TAS1R3) of Canis lupus familiaris (Dog).